Reading from the N-terminus, the 471-residue chain is Sulfate adenylyltransferase subunit 1 (471 aa).

Residues 22–237 (KELLRFLTCG…LESVQITGAK (216 aa)) enclose the tr-type G domain. The interval 31-38 (GSVDDGKS) is G1. GTP is bound at residue 31-38 (GSVDDGKS). The segment at 89–93 (GITID) is G2. The tract at residues 110–113 (DTPG) is G3. Residues 110-114 (DTPGH) and 165-168 (NKMD) contribute to the GTP site. The tract at residues 165-168 (NKMD) is G4. Residues 202–204 (SAL) are G5.

This sequence belongs to the TRAFAC class translation factor GTPase superfamily. Classic translation factor GTPase family. CysN/NodQ subfamily. Heterodimer composed of CysD, the smaller subunit, and CysN.

It carries out the reaction sulfate + ATP + H(+) = adenosine 5'-phosphosulfate + diphosphate. Its pathway is sulfur metabolism; hydrogen sulfide biosynthesis; sulfite from sulfate: step 1/3. Functionally, with CysD forms the ATP sulfurylase (ATPS) that catalyzes the adenylation of sulfate producing adenosine 5'-phosphosulfate (APS) and diphosphate, the first enzymatic step in sulfur assimilation pathway. APS synthesis involves the formation of a high-energy phosphoric-sulfuric acid anhydride bond driven by GTP hydrolysis by CysN coupled to ATP hydrolysis by CysD. The chain is Sulfate adenylyltransferase subunit 1 from Saccharophagus degradans (strain 2-40 / ATCC 43961 / DSM 17024).